Reading from the N-terminus, the 621-residue chain is ATP-dependent lipid A-core flippase (621 aa).

5 helical membrane-spanning segments follow: residues 32-52 (IVAA…LAAF), 91-111 (VWGT…LVVI), 192-212 (IVLL…FPLL), 286-306 (SPFS…IALW), and 312-332 (YTTI…YAPI). In terms of domain architecture, ABC transmembrane type-1 spans 33–344 (VAALIAIFGV…LANISIPMQT (312 aa)). Residues 378 to 611 (FRNVDVEYRS…NGYYTMLRNI (234 aa)) enclose the ABC transporter domain. 410–417 (GRSGSGKS) provides a ligand contact to ATP.

Belongs to the ABC transporter superfamily. Lipid exporter (TC 3.A.1.106) family. As to quaternary structure, homodimer.

It is found in the cell inner membrane. The catalysed reaction is ATP + H2O + lipid A-core oligosaccharideSide 1 = ADP + phosphate + lipid A-core oligosaccharideSide 2.. In terms of biological role, involved in lipopolysaccharide (LPS) biosynthesis. Translocates lipid A-core from the inner to the outer leaflet of the inner membrane. Transmembrane domains (TMD) form a pore in the inner membrane and the ATP-binding domain (NBD) is responsible for energy generation. The protein is ATP-dependent lipid A-core flippase of Neisseria meningitidis serogroup A / serotype 4A (strain DSM 15465 / Z2491).